The chain runs to 446 residues: Probable E3 ubiquitin-protein ligase XBOS31 (446 aa).

5 ANK repeats span residues 46–75 (DRFT…DVDV), 79–108 (KKQT…NVLT), 113–142 (RART…QAQG), 160–189 (RGAT…IVSA), and 197–227 (PGST…RLQR). The RING-type zinc-finger motif lies at 317 to 366 (CNICFEQACSMEVKECGHQMCAACTLAICCHSKPNPKTLLLHPPACPFCR). The segment at 376–401 (TTNSNKTNSRRRSRSRSSSFKGGLSS) is disordered.

The catalysed reaction is S-ubiquitinyl-[E2 ubiquitin-conjugating enzyme]-L-cysteine + [acceptor protein]-L-lysine = [E2 ubiquitin-conjugating enzyme]-L-cysteine + N(6)-ubiquitinyl-[acceptor protein]-L-lysine.. Its pathway is protein modification; protein ubiquitination. The sequence is that of Probable E3 ubiquitin-protein ligase XBOS31 (XBOS31) from Oryza sativa subsp. japonica (Rice).